The following is a 1040-amino-acid chain: MQVLPPSSTGGPSRLFIMRPVATTLLMVAILLAGIIGYRALPVSALPEVDYPTIQVVTLYPGASPDVMTSAVTAPLERQFGQMSGLKQMSSQSSGGASVITLQFQLTLPLDVAEQEVQAAINAATNLLPSDLPNPPVYSKVNPADPPIMTLAVTSTAMPMTQVEDMVETRVAQKISQISGVGLVTLSGGQRPAVRVKLNAQAIAALGLTSETVRTAITGANVNSAKGSLDGPSRAVTLSANDQMQSAEEYRQLIIAYQNGAPIRLGDVATVEQGAENSWLGAWANKEQAIVMNVQRQPGANIISTADSIRQMLPQLTESLPKSVKVTVLSDRTTNIRASVDDTQFELMMAIALVVMIIYLFLRNIPATIIPGVAVPLSLIGTFAVMVFLDFSINNLTLMALTIATGFVVDDAIVVIENISRYIEKGEKPLAAALKGAGEIGFTIISLTFSLIAVLIPLLFMGDIVGRLFREFAITLAVAILISAVVSLTLTPMMCARMLSQESLRKQNRFSRASEKMFDRIIAAYGRGLAKVLNHPWLTLSVALSTLLLSVLLWVFIPKGFFPVQDNGIIQGTLQAPQSSSFANMAQRQRQVADVILQDPAVQSLTSFVGVDGTNPSLNSARLQINLKPLDERDDRVQKVIARLQTAVDKVPGVDLFLQPTQDLTIDTQVSRTQYQFTLQATSLDALSTWVPQLMEKLQQLPQLSDVSSDWQDKGLVAYVNVDRDSASRLGISMADVDNALYNAFGQRLISTIYTQANQYRVVLEHNTENTPGLAALDTIRLTSSDGGVVPLSSIAKIEQRFAPLSINHLDQFPVTTISFNVPDNYSLGDAVQAIMDTEKTLNLPVDITTQFQGSTLAFQSALGSTVWLIVAAVVAMYIVLGILYESFIHPITILSTLPTAGVGALLALMIAGSELDVIAIIGIILLIGIVKKNAIMMIDFALAAEREQGMSPRDAIYQACLLRFRPILMTTLAALLGALPLMLSTGVGAELRRPLGIGMVGGLIVSQVLTLFTTPVIYLLFDRLALWTKSRFARHEEEA.

12 helical membrane-spanning segments follow: residues 16 to 36 (FIMR…AGII), 347 to 367 (LMMA…NIPA), 369 to 389 (IIPG…MVFL), 396 to 416 (LTLM…IVVI), 440 to 460 (IGFT…PLLF), 472 to 492 (FAIT…TLTP), 537 to 557 (WLTL…WVFI), 863 to 883 (LGST…VLGI), 888 to 908 (FIHP…ALLA), 911 to 931 (IAGS…IGIV), 968 to 988 (ILMT…STGV), and 998 to 1018 (IGMV…TPVI).

This sequence belongs to the resistance-nodulation-cell division (RND) (TC 2.A.6) family. MdtB subfamily. In terms of assembly, part of a tripartite efflux system composed of MdtA, MdtB and MdtC. MdtB forms a heteromultimer with MdtC.

Its subcellular location is the cell inner membrane. Functionally, the MdtABC tripartite complex confers resistance against novobiocin and deoxycholate. The protein is Multidrug resistance protein MdtB of Escherichia coli O139:H28 (strain E24377A / ETEC).